A 405-amino-acid chain; its full sequence is F-box/kelch-repeat protein At2g43445 (405 aa).

The region spanning 7-53 is the F-box domain; it reads NTNSIYIVSELLEEIFLGLPLKSILKFKTVSKQWRSILESNLFVERR. Kelch repeat units lie at residues 146–197 and 356–400; these read RDKV…CVNG and THHD…VVGY.

This is F-box/kelch-repeat protein At2g43445 from Arabidopsis thaliana (Mouse-ear cress).